The primary structure comprises 335 residues: Adenosine deaminase (335 aa).

The Zn(2+) site is built by His12 and His14. Residues His14 and Asp16 each coordinate substrate. His197 contacts Zn(2+). Glu200 serves as the catalytic Proton donor. Asp278 contacts Zn(2+).

Belongs to the metallo-dependent hydrolases superfamily. Adenosine and AMP deaminases family. Adenosine deaminase subfamily. Zn(2+) serves as cofactor.

It carries out the reaction adenosine + H2O + H(+) = inosine + NH4(+). It catalyses the reaction 2'-deoxyadenosine + H2O + H(+) = 2'-deoxyinosine + NH4(+). Catalyzes the hydrolytic deamination of adenosine and 2-deoxyadenosine. This is Adenosine deaminase from Clostridium botulinum (strain Langeland / NCTC 10281 / Type F).